We begin with the raw amino-acid sequence, 327 residues long: Ribonucleoside-diphosphate reductase small chain (327 aa).

Residues aspartate 70, glutamate 101, and histidine 104 each coordinate Fe cation. Tyrosine 108 is a catalytic residue. Residues glutamate 164, glutamate 198, and histidine 201 each coordinate Fe cation.

The protein belongs to the ribonucleoside diphosphate reductase small chain family. In terms of assembly, heterotetramer composed of a homodimer of the large subunit (R1) and a homodimer of the small subunit (R2). Larger multisubunit protein complex are also active, composed of (R1)n(R2)n. Fe cation is required as a cofactor.

It catalyses the reaction a 2'-deoxyribonucleoside 5'-diphosphate + [thioredoxin]-disulfide + H2O = a ribonucleoside 5'-diphosphate + [thioredoxin]-dithiol. In terms of biological role, ribonucleoside-diphosphate reductase holoenzyme provides the precursors necessary for viral DNA synthesis. Allows virus growth in non-dividing cells. Catalyzes the biosynthesis of deoxyribonucleotides from the corresponding ribonucleotides. In African swine fever virus (isolate Tick/South Africa/Pretoriuskop Pr4/1996) (ASFV), this protein is Ribonucleoside-diphosphate reductase small chain.